An 85-amino-acid chain; its full sequence is Type 3 secretion system needle filament protein (85 aa).

Positions leucine 13 to threonine 41 form a coiled coil.

As to quaternary structure, the core secretion machinery of the T3SS is composed of approximately 20 different proteins, including cytoplasmic components, a base, an export apparatus and a needle. This subunit polymerizes and forms the helical needle filament. Forms a stable heterotrimeric complex with PscE and PscG in the cytoplasm, blocking it in a monomeric state and preventing its polymerization.

Its subcellular location is the secreted. The protein resides in the cell surface. Component of the type III secretion system (T3SS), also called injectisome, which is used to inject bacterial effector proteins into eukaryotic host cells, facilitating the establishment and dissemination of infection. PscF/SctF forms the external needle filament that protrudes from the bacterial surface. This is Type 3 secretion system needle filament protein from Pseudomonas aeruginosa (strain ATCC 15692 / DSM 22644 / CIP 104116 / JCM 14847 / LMG 12228 / 1C / PRS 101 / PAO1).